We begin with the raw amino-acid sequence, 2620 residues long: MAHLNMFNHLIPLEMDMDGADEEKRQRVFSSFYHFGARLYDCLHTIAIEIEDDDCEHFPTKAISTVLKILNFEHFLSSDKCRFPPVSNLLDIIESRQMDDCQILFKISDLLEDHKSEKPERFGPYNPLDPKKVPIKNAVDALTSVSSMAYSFLATTFAEELMKAAIRDIYVFDEDSLEDNDETQLSDENGVFDSTPSNNEKKDSIINFRQLPSIDSQIVQQNAMLLLAARVGIEQFVEYSHEIGVMQFRGDKLSKITPLMEAAASSSETIVRRLLELGADPNVASIPNCNTALIYAASTDGRDVVREILMTEGPKKPDVYLINNHYHDAMMEVALVGGTDTLKEFLEMGYRPRFLNLRQQERDSALTLSAQKGHIKIVTAIMDYYEKNPPQTEEEKQELCLERYSALMEAAMEGHIDVCKLMLSRGTPADLCTEVTIEPSPLIVASAGGYPEVVEVLLAAGAKIEELSNKKNTPLMEACAGDQGDQAGVVKLLLSKHAEVDVSNPDTGDTPLSLAARNGYIAIMKMLIEKGGDLTAGKTSPIVEAARNGHLECIQFILAHCKTIPQDQLSRALVSAADFGSLLIVEEVIRAGADLNFEQDERTALMKAAKGDHFEVVQLLLSKGASVNFKSSKNDATALSLACSEGNMEIAEFLIRNGADPMLKMDDGVNCFMEVARHGSIDLMSLLVEFTKGNMPMDKDPPKLGITRCSSKNGKKRRKGMPSGQDMLSMFNGMYPKRKGSKQMGLHEMPFSTQEIDMLTHLLKMQQQMVAYETHKSTETETAEIKKVLRAIESVYGFTSEGKINFPPPPNRQDMDKLYNGELVPNIKLWAELVSHGWLEMERKIGRPIELSSFQQCNEGHSTNAAAAVSAVAAAATGMDSQTYLASVFAKMNNGEEMPRVPATVGSLNAASAAMTGISFHSDDAMRLFGGASFATKLLSDNKKPCNHQQYASIHHIQEGAFRAALIKMSSMFRERNGCAISVRDMESNFPIEHQEERFGPSKPIPSGPKKTSLTAPNPADTSDVTTKQPGAMKKDGLEAKKIYPGIIKLAAEMEKLFRANPTESNRDLALTTAYIASALPDHFCSELQLESGDRILKKLLSGLTEKQKNTVISRMRSVVNKESGSSLLRRSVDNLTDKRIKEDYLKLFRDSTDCAFYDKCVQEKNHLLKAIEIQKKGKTSSGTLISTSSKSLMAKSVQSQQQQGQLRRTHSEGDGAERAKSRSNAIDKATETTLETPLTIACANGHKDIVELLLKEGANIEHRDKKGFSPLIIAATAGHSSVVEVLLKNHAAIEAQSDRTKDTALSLACSGGRKDVVELLLAHGANKEHRNVSDYTPLSLASSGGYIEIVNMLLTAGSEINSRTGSKLGISPLMLASMNGHREATRVLLEKGSDINAQIETNRNTALTLASFQGRTEVVKLLLAYNANVEHRAKTGLTPLMECASGGYVDVGNLLIAAGADTNASPVQQTKDTALTISAEKGHEKFVRMLLNGDAAVDVRNKKGCTALWLACNGGYLSTAQALLEKGADPDMFDNRKISPMMAAFRKGHVEIVKYMVNSAKQFPNEQDLIRAQQTAETDDIKKKCGECIDIIRSAKKAQAESAELAAQKLLELIDEEKVQKEVKKQKQKDKKIKKKEEKKIKKQEAEPEPEPEPEPEPVPEPEPVVISEPVPEPVPIVVEEPPKEPPKPRRNRRKTNPDGVPKGPKVVVEPKASIAEEPSEMPYEPIVVTIPPPAKIHAPMVSPGSYSESEEWCKAGKEGKKVKSSKKSGYGAPSSAGSSQAKESSTTSSVISDQTPPYEIDTRNESSWKLTIPAYAASRVIGKGGSNVNAVREATGAIIEINKIQESNKQAERTVLAKGTPEMVRYAMNIINYMIYDADVLVTDAIRTVLRGNLSVASSFSSEGTSKSAVDSTYAPSSIPKSLSSASIARQSASPIPQQSSQRSAKSHHHQKDSGGGNVWHQRMAAREEKVEPLMETKRISQSPKQAPQIPSTQQQSKLQSRQDQASETLVRVAPAENFVAPVPASSIAAPSRPNQNVLDRVIAPSLRREPTTTPLIQPVHPVQSVQSVQHMQQQQLARPEQKLAQPCLPDPIGQRYSQPISRPQSSVQVSQSSFSKAPGTRPSTDFSRAPGPPQQQQTQNNMTTARNELFDEQLAFGQFKPTGMNSVATVIPAKPSVNNQNDDKNGNSDDFDFSKMRMFDEGKVGNIWGKSDEDSAWGGLFSQFLPQLGANSSLNNSNSKNDSSNEWGQNEFISQLLINSSLPNATSSPQGASTISSAPVQQPSTSSVTTGLSSLELKGWMPASFAPSARDPNRSQPPLFARSQSNSVANSTSTNIQQQQQQQIQHLQQQQALQQQQQRIQQFQQQYQQHQSQSSQQPSDLMSSKFSMLQSQQQQQQLYNQMQSLGQDGQGSNLYNHLAAQLLTHQESSTGAPGPTSSQLANSYYPSPSYTDASVLGQISMPSLSQRGIKQFDGFNNDSDGVIAAILEQQQQQKKQGLAQQSFMHNSQQPQPFGAPSNASANQSRLGMIQPRPQPPPFVAPQAPPGFSSLGNASSTTNPSRTSMQQMYQQYGQSSQQQPYGQMPQAMDWNRLGQQQQSASGQQNHQSSSSNKWSSNW.

ANK repeat units lie at residues 254–283 (SKIT…DPNV), 288–318 (NCNT…KKPD), 361–390 (ERDS…KNPP), 402–431 (ERYS…PADL), 437–466 (IEPS…KIEE), 470–502 (KKNT…EVDV), 507–536 (TGDT…DLTA), 538–566 (KTSP…TIPQ), 568–597 (QLSR…DLNF), 600–629 (DERT…SVNF), 634–663 (NDAT…DPML), and 667–697 (DGVN…NMPM). 3 disordered regions span residues 699 to 726 (KDPP…SGQD), 994 to 1032 (HQEE…QPGA), and 1192 to 1229 (SLMA…AIDK). Polar residues predominate over residues 1012–1029 (TSLTAPNPADTSDVTTKQ). Low complexity predominate over residues 1192–1206 (SLMAKSVQSQQQQGQ). The span at 1210-1221 (THSEGDGAERAK) shows a compositional bias: basic and acidic residues. ANK repeat units lie at residues 1234–1263 (TLET…NIEH), 1267–1296 (KGFS…AIEA), 1301–1330 (TKDT…NKEH), 1334–1363 (SDYT…EINS), 1369–1398 (LGIS…DINA), 1403–1432 (NRNT…NVEH), 1436–1465 (TGLT…DTNA), 1471–1500 (TKDT…AVDV), 1504–1533 (KGCT…DPDM), and 1537–1566 (RKIS…QFPN). Positions 1596 to 1648 (AKKAQAESAELAAQKLLELIDEEKVQKEVKKQKQKDKKIKKKEEKKIKKQEAE) form a coiled coil. Disordered regions lie at residues 1621–1720 (QKEV…AEEP) and 1759–1804 (KEGK…EIDT). The segment covering 1636–1647 (KKEEKKIKKQEA) has biased composition (basic and acidic residues). Over residues 1648–1661 (EPEPEPEPEPEPVP) the composition is skewed to acidic residues. Low complexity-rich tracts occupy residues 1665–1681 (PVVI…IVVE) and 1769–1791 (KSGY…TTSS). The region spanning 1807-1873 (ESSWKLTIPA…EMVRYAMNII (67 aa)) is the KH domain. Positions 1899–1913 (ASSFSSEGTSKSAVD) are enriched in polar residues. 8 disordered regions span residues 1899 to 1962 (ASSF…GNVW), 1976 to 2010 (LMET…QASE), 2067 to 2143 (SVQS…QTQN), 2267 to 2294 (NATS…VTTG), 2307 to 2343 (SFAP…QQQQ), 2372 to 2391 (QHQS…KFSM), 2429 to 2448 (QESS…NSYY), and 2496 to 2620 (QKKQ…SSNW). A compositionally biased stretch (low complexity) spans 1917–1946 (APSSIPKSLSSASIARQSASPIPQQSSQRS). The span at 1982–1993 (ISQSPKQAPQIP) shows a compositional bias: polar residues. Low complexity-rich tracts occupy residues 1994–2006 (STQQ…SRQD), 2067–2078 (SVQSVQHMQQQQ), and 2100–2118 (SQPI…SSFS). Polar residues-rich tracts occupy residues 2267-2286 (NATS…VQQP) and 2325-2339 (RSQS…STNI). The span at 2505-2528 (SFMHNSQQPQPFGAPSNASANQSR) shows a compositional bias: polar residues. The span at 2535–2547 (RPQPPPFVAPQAP) shows a compositional bias: pro residues. Residues 2552-2565 (SLGNASSTTNPSRT) show a composition bias toward polar residues. Low complexity-rich tracts occupy residues 2566–2588 (SMQQ…QMPQ) and 2597–2620 (QQQQ…SSNW).

The protein belongs to the mask family.

The protein resides in the cytoplasm. This chain is Ankyrin repeat and KH domain-containing protein mask-1, found in Caenorhabditis elegans.